A 310-amino-acid polypeptide reads, in one-letter code: Putative S-adenosyl-L-methionine-dependent methyltransferase MMAR_3534 (310 aa).

S-adenosyl-L-methionine is bound by residues aspartate 131 and 160–161 (DL).

Belongs to the UPF0677 family.

Functionally, exhibits S-adenosyl-L-methionine-dependent methyltransferase activity. The sequence is that of Putative S-adenosyl-L-methionine-dependent methyltransferase MMAR_3534 from Mycobacterium marinum (strain ATCC BAA-535 / M).